We begin with the raw amino-acid sequence, 605 residues long: Zinc metalloproteinase nas-34 (605 aa).

The signal sequence occupies residues M1 to A19. Positions K20–R124 are excised as a propeptide. Positions R124–N322 constitute a Peptidase M12A domain. Cystine bridges form between C165/C321 and C191/C211. H219 contributes to the Zn(2+) binding site. Residue E220 is part of the active site. Zn(2+)-binding residues include H223 and H229. The EGF-like domain maps to N317 to D357. A glycan (N-linked (GlcNAc...) asparagine) is linked at N322. Cystine bridges form between C325–C345, C347–C356, C366–C388, and C415–C436. The region spanning C366–D469 is the CUB domain. A disordered region spans residues T479–T526. The TSP type-1 domain occupies T525 to T566. 3 disulfides stabilise this stretch: C531-C551, C537-C560, and C541-C565.

The cofactor is Zn(2+). Expressed in hypodermal cells. First expressed in the dorsal and lateral surface area of the middle and posterior region of embryos. At later stages, it localizes to lateral surface regions, probably corresponding to hypodermal seam cells. In L1 larvae, it is expressed in seam cells and in a few cells anterior to the nerve ring.

The protein localises to the secreted. In terms of biological role, metalloprotease. Required for normal hatching and migration of neuroblasts. May act by degrading eggshell proteins at hatching. This Caenorhabditis elegans protein is Zinc metalloproteinase nas-34 (hch-1).